The chain runs to 622 residues: Chaperone protein HtpG (622 aa).

The a; substrate-binding stretch occupies residues 1 to 334; that stretch reads MKGQETRGFQ…SNDLPLNVSR (334 aa). Residues 335–550 are b; sequence EILQDSRITQ…ADEMSTQMAK (216 aa). A c region spans residues 551 to 622; the sequence is LFAAAGQQAP…IRRMNQLLTA (72 aa).

The protein belongs to the heat shock protein 90 family. Homodimer.

The protein resides in the cytoplasm. Its function is as follows. Molecular chaperone. Has ATPase activity. This Yersinia pestis protein is Chaperone protein HtpG.